A 432-amino-acid chain; its full sequence is Putative D-alanyl-D-alanine carboxypeptidase (432 aa).

A helical; Signal-anchor membrane pass occupies residues 7–25 (ATVLLTFSLSAFAVEYPVL).

Belongs to the peptidase S12 family. YfeW subfamily.

It is found in the cell inner membrane. It carries out the reaction Preferential cleavage: (Ac)2-L-Lys-D-Ala-|-D-Ala. Also transpeptidation of peptidyl-alanyl moieties that are N-acyl substituents of D-alanine.. The sequence is that of Putative D-alanyl-D-alanine carboxypeptidase from Salmonella agona (strain SL483).